The primary structure comprises 435 residues: Serine/threonine-protein kinase 40 (435 aa).

The 298-residue stretch at 35–332 (FVLGPRLGNS…DVLEALSAII (298 aa)) folds into the Protein kinase domain. Residues 41–49 (LGNSPVPSI) and Lys66 each bind ATP. The active-site Proton acceptor is the Asp197.

Belongs to the protein kinase superfamily. CAMK Ser/Thr protein kinase family.

Its subcellular location is the nucleus. The protein localises to the cytoplasm. The enzyme catalyses L-seryl-[protein] + ATP = O-phospho-L-seryl-[protein] + ADP + H(+). It catalyses the reaction L-threonyl-[protein] + ATP = O-phospho-L-threonyl-[protein] + ADP + H(+). Its function is as follows. May be a negative regulator of NF-kappa-B and p53-mediated gene transcription. In Mus musculus (Mouse), this protein is Serine/threonine-protein kinase 40 (Stk40).